A 313-amino-acid polypeptide reads, in one-letter code: Protein FixB (313 aa).

Position 255–283 (255–283) interacts with FAD; sequence LYLAVGISGQIQHMVGANASQTIFAINKD.

The protein belongs to the ETF alpha-subunit/FixB family. In terms of assembly, heterodimer of FixA and FixB.

It functions in the pathway amine and polyamine metabolism; carnitine metabolism. Required for anaerobic carnitine reduction. May bring reductant to CaiA. The sequence is that of Protein FixB from Escherichia coli O8 (strain IAI1).